The chain runs to 657 residues: Chemoreceptor McpA (657 aa).

Residues 1 to 5 lie on the Cytoplasmic side of the membrane; it reads MKRIR. The chain crosses the membrane as a helical span at residues 6–29; sequence LVDLPLIIKIGFAPAFALLMLAVM. Residues 30-188 lie on the Periplasmic side of the membrane; that stretch reads AGGAILVQKS…ESESAKRQAQ (159 aa). The chain crosses the membrane as a helical span at residues 189-212; it reads ATAAMSVTIIMSLLTLGAVGALAF. Residues 213 to 657 lie on the Cytoplasmic side of the membrane; that stretch reads LTVMTTRKSI…APASDGWEEF (445 aa). HAMP domains are found at residues 216–269 and 297–349; these read MTTR…HLEQ and QEAS…ETMK. The 230-residue stretch at 354–583 folds into the Methyl-accepting transducer domain; the sequence is STDGLSTGAD…QSTAATHSLK (230 aa). Gln378 bears the Glutamate methyl ester (Gln) mark. Residues Glu385 and Glu392 each carry the glutamate methyl ester (Glu) modification. Residue Gln574 is modified to Glutamate methyl ester (Gln). The tract at residues 634–657 is disordered; that stretch reads ARPGRSSGSAALAQAPASDGWEEF.

This sequence belongs to the methyl-accepting chemotaxis (MCP) protein family.

It localises to the cell membrane. Functionally, chemotactic-signal transducers respond to changes in the concentration of attractants and repellents in the environment, transduce a signal from the outside to the inside of the cell, and facilitate sensory adaptation through the variation of the level of methylation. Attractants increase the level of methylation while repellents decrease the level of methylation. The polypeptide is Chemoreceptor McpA (mcpA) (Caulobacter vibrioides (strain ATCC 19089 / CIP 103742 / CB 15) (Caulobacter crescentus)).